Consider the following 316-residue polypeptide: MKKFGKKVVLVGDGSVGSSYAFAMVTQGIADEFVIIDIAKDKVEADVKDLNHGALYSSSPVTVKAGEYEDCKDADLVVITAGAPQKPGETRLQLVEKNTKIMKSIVTSVMDSGFDGFFLIAANPVDILTRYVKEVTGLPAERVIGSGTVLDSARFRYLISKELGVTSSSVHASIIGEHGDSELAVWSQANVGGISVYDTLKEETGSDAKANEIYINTRDAAYDIIQAKGSTYYGIALALLRISKALLNNENSILTVSSQLNGQYGFNDVYLGLPTLINQNGAVKIYETPLNDNELQLLEKSVKTLEDTYDSIKHLV.

Residues Val16, Asp37, Lys42, Tyr68, and 82–83 (GA) each bind NAD(+). Substrate-binding residues include Gln85 and Arg91. Residues Ser104, 121–123 (AAN), and Ser146 each bind NAD(+). Position 123-126 (123-126 (NPVD)) interacts with substrate. A substrate-binding site is contributed by 151–154 (DSAR). Beta-D-fructose 1,6-bisphosphate is bound by residues Arg156 and His171. His178 functions as the Proton acceptor in the catalytic mechanism. Tyr222 is subject to Phosphotyrosine. Thr231 lines the substrate pocket.

Belongs to the LDH/MDH superfamily. LDH family. Homotetramer.

The protein resides in the cytoplasm. It carries out the reaction (S)-lactate + NAD(+) = pyruvate + NADH + H(+). The protein operates within fermentation; pyruvate fermentation to lactate; (S)-lactate from pyruvate: step 1/1. Allosterically activated by fructose 1,6-bisphosphate (FBP). Catalyzes the conversion of lactate to pyruvate. This Staphylococcus epidermidis (strain ATCC 12228 / FDA PCI 1200) protein is L-lactate dehydrogenase.